The sequence spans 160 residues: 3-hydroxyacyl-[acyl-carrier-protein] dehydratase FabZ (160 aa).

Residue His-63 is part of the active site.

It belongs to the thioester dehydratase family. FabZ subfamily.

The protein localises to the cytoplasm. The enzyme catalyses a (3R)-hydroxyacyl-[ACP] = a (2E)-enoyl-[ACP] + H2O. Its function is as follows. Involved in unsaturated fatty acids biosynthesis. Catalyzes the dehydration of short chain beta-hydroxyacyl-ACPs and long chain saturated and unsaturated beta-hydroxyacyl-ACPs. The chain is 3-hydroxyacyl-[acyl-carrier-protein] dehydratase FabZ from Xylella fastidiosa (strain M12).